We begin with the raw amino-acid sequence, 152 residues long: Deoxyuridine 5'-triphosphate nucleotidohydrolase (152 aa).

Substrate contacts are provided by residues 71–73 (RSG), Asn-84, 88–90 (LID), and Met-98.

Belongs to the dUTPase family. It depends on Mg(2+) as a cofactor.

The catalysed reaction is dUTP + H2O = dUMP + diphosphate + H(+). It participates in pyrimidine metabolism; dUMP biosynthesis; dUMP from dCTP (dUTP route): step 2/2. This enzyme is involved in nucleotide metabolism: it produces dUMP, the immediate precursor of thymidine nucleotides and it decreases the intracellular concentration of dUTP so that uracil cannot be incorporated into DNA. This Enterobacter sp. (strain 638) protein is Deoxyuridine 5'-triphosphate nucleotidohydrolase.